The chain runs to 968 residues: RNA polymerase-associated protein RapA (968 aa).

Positions 164–334 (DVGRRHAPRV…FARLRLLDPN (171 aa)) constitute a Helicase ATP-binding domain. Position 177-184 (177-184 (DEVGLGKT)) interacts with ATP. Residues 280–283 (DEAH) carry the DEAH box motif. In terms of domain architecture, Helicase C-terminal spans 490-662 (RVEWLMGYLT…YLASPDQTEG (173 aa)).

The protein belongs to the SNF2/RAD54 helicase family. RapA subfamily. Interacts with the RNAP. Has a higher affinity for the core RNAP than for the holoenzyme. Its ATPase activity is stimulated by binding to RNAP.

Its function is as follows. Transcription regulator that activates transcription by stimulating RNA polymerase (RNAP) recycling in case of stress conditions such as supercoiled DNA or high salt concentrations. Probably acts by releasing the RNAP, when it is trapped or immobilized on tightly supercoiled DNA. Does not activate transcription on linear DNA. Probably not involved in DNA repair. This Shigella flexneri serotype 5b (strain 8401) protein is RNA polymerase-associated protein RapA.